Consider the following 174-residue polypeptide: Acetolactate synthase small subunit (174 aa).

Positions 4 to 78 (TLSVLVQDEA…NILNVQDVTN (75 aa)) constitute an ACT domain.

The protein belongs to the acetolactate synthase small subunit family. In terms of assembly, dimer of large and small chains.

It localises to the plastid. It is found in the chloroplast. It carries out the reaction 2 pyruvate + H(+) = (2S)-2-acetolactate + CO2. The protein operates within amino-acid biosynthesis; L-isoleucine biosynthesis; L-isoleucine from 2-oxobutanoate: step 1/4. Its pathway is amino-acid biosynthesis; L-valine biosynthesis; L-valine from pyruvate: step 1/4. This Pyropia yezoensis (Susabi-nori) protein is Acetolactate synthase small subunit (ilvH).